Reading from the N-terminus, the 595-residue chain is Elongation factor 4 (595 aa).

Residues 2-184 form the tr-type G domain; sequence KNIRNFSIIA…QIVEKIPAPK (183 aa). GTP contacts are provided by residues 14 to 19 and 131 to 134; these read DHGKST and NKID.

The protein belongs to the TRAFAC class translation factor GTPase superfamily. Classic translation factor GTPase family. LepA subfamily.

Its subcellular location is the cell inner membrane. It carries out the reaction GTP + H2O = GDP + phosphate + H(+). Functionally, required for accurate and efficient protein synthesis under certain stress conditions. May act as a fidelity factor of the translation reaction, by catalyzing a one-codon backward translocation of tRNAs on improperly translocated ribosomes. Back-translocation proceeds from a post-translocation (POST) complex to a pre-translocation (PRE) complex, thus giving elongation factor G a second chance to translocate the tRNAs correctly. Binds to ribosomes in a GTP-dependent manner. The chain is Elongation factor 4 from Ruthia magnifica subsp. Calyptogena magnifica.